Consider the following 611-residue polypeptide: Probable Xaa-Pro aminopeptidase P (611 aa).

Asp408, Asp419, Glu517, and Glu531 together coordinate Mn(2+).

It belongs to the peptidase M24B family. Requires Mn(2+) as cofactor.

The enzyme catalyses Release of any N-terminal amino acid, including proline, that is linked to proline, even from a dipeptide or tripeptide.. Catalyzes the removal of a penultimate prolyl residue from the N-termini of peptides. This is Probable Xaa-Pro aminopeptidase P (AMPP) from Coccidioides posadasii (strain RMSCC 757 / Silveira) (Valley fever fungus).